We begin with the raw amino-acid sequence, 103 residues long: Host transcription reprogramming factor 6 (103 aa).

The first 19 residues, 1–19 (MRATTAFQVIAFLAVGAAA), serve as a signal peptide directing secretion. The C2H2-type zinc-finger motif lies at 66–92 (YWCPNQVCAKTFATQEERDHHIANTVH). The interval 82–103 (ERDHHIANTVHPTNSKRDVLLQ) is disordered.

It localises to the secreted. Its subcellular location is the host nucleus. Its function is as follows. Probable secreted effector that translocates into the nuclei of host cells to reprogram the expression of targeted genes by binding on effector binding elements in rice. This Pyricularia oryzae (strain 70-15 / ATCC MYA-4617 / FGSC 8958) (Rice blast fungus) protein is Host transcription reprogramming factor 6.